A 112-amino-acid chain; its full sequence is Seminal vesicle secretory protein 4 (112 aa).

The signal sequence occupies residues Met1–Gly21. The interval Glu26–Asn112 is disordered. Low complexity-rich tracts occupy residues Ser36 to Ser47 and Arg85 to Ser97.

This sequence belongs to the SVP2/SVP5/SVP6 family. Testis.

The protein localises to the secreted. The protein resides in the extracellular space. This is Seminal vesicle secretory protein 4 (Svs4) from Rattus norvegicus (Rat).